Here is a 413-residue protein sequence, read N- to C-terminus: SET and MYND domain-containing protein DDB_G0273591 (413 aa).

The 306-residue stretch at 6-311 (DGLKLSNSEL…KGDQINISYL (306 aa)) folds into the SET domain. The segment at 51-95 (CYNCIKLIKSPSPQQVPRCFGCNEVWYCSEKCKQDNQAKHQHYEC) adopts an MYND-type zinc-finger fold. The segment at 205 to 232 (DNNNNNNNNNNNNNNNNNNNNNNNNNNN) is disordered. A coiled-coil region spans residues 216–243 (NNNNNNNNNNNNNNNNNNNIEELIKLIR).

This sequence belongs to the class V-like SAM-binding methyltransferase superfamily.

Functionally, probable methyltransferase. The protein is SET and MYND domain-containing protein DDB_G0273591 of Dictyostelium discoideum (Social amoeba).